The chain runs to 170 residues: Adenine phosphoribosyltransferase (170 aa).

It belongs to the purine/pyrimidine phosphoribosyltransferase family. In terms of assembly, homodimer.

It is found in the cytoplasm. The enzyme catalyses AMP + diphosphate = 5-phospho-alpha-D-ribose 1-diphosphate + adenine. It functions in the pathway purine metabolism; AMP biosynthesis via salvage pathway; AMP from adenine: step 1/1. In terms of biological role, catalyzes a salvage reaction resulting in the formation of AMP, that is energically less costly than de novo synthesis. This Streptococcus pneumoniae (strain Taiwan19F-14) protein is Adenine phosphoribosyltransferase.